We begin with the raw amino-acid sequence, 299 residues long: UDP-N-acetylenolpyruvoylglucosamine reductase (299 aa).

The 166-residue stretch at K27 to G192 folds into the FAD-binding PCMH-type domain. Residue R172 is part of the active site. The segment at A206 to N225 is disordered. Polar residues predominate over residues R208–K224. S221 acts as the Proton donor in catalysis. The active site involves E291.

Belongs to the MurB family. Requires FAD as cofactor.

Its subcellular location is the cytoplasm. The catalysed reaction is UDP-N-acetyl-alpha-D-muramate + NADP(+) = UDP-N-acetyl-3-O-(1-carboxyvinyl)-alpha-D-glucosamine + NADPH + H(+). Its pathway is cell wall biogenesis; peptidoglycan biosynthesis. Cell wall formation. This chain is UDP-N-acetylenolpyruvoylglucosamine reductase, found in Sphingopyxis alaskensis (strain DSM 13593 / LMG 18877 / RB2256) (Sphingomonas alaskensis).